The primary structure comprises 559 residues: Formate--tetrahydrofolate ligase (559 aa).

Residue 68-75 (TPAGEGKT) coordinates ATP.

This sequence belongs to the formate--tetrahydrofolate ligase family.

The catalysed reaction is (6S)-5,6,7,8-tetrahydrofolate + formate + ATP = (6R)-10-formyltetrahydrofolate + ADP + phosphate. Its pathway is one-carbon metabolism; tetrahydrofolate interconversion. This is Formate--tetrahydrofolate ligase from Rhizobium meliloti (strain 1021) (Ensifer meliloti).